Reading from the N-terminus, the 246-residue chain is UDP-N-acetyl-D-mannosaminuronic acid transferase (246 aa).

The protein belongs to the glycosyltransferase 26 family.

It carries out the reaction UDP-N-acetyl-alpha-D-mannosaminouronate + N-acetyl-alpha-D-glucosaminyl-di-trans,octa-cis-undecaprenyl diphosphate = beta-D-ManNAcA-(1-&gt;4)-alpha-D-GlcNAc-di-trans,octa-cis-undecaprenyl diphosphate + UDP + H(+). The protein operates within bacterial outer membrane biogenesis; enterobacterial common antigen biosynthesis. Its function is as follows. Catalyzes the synthesis of Und-PP-GlcNAc-ManNAcA (Lipid II), the second lipid-linked intermediate involved in enterobacterial common antigen (ECA) synthesis. In Escherichia coli O127:H6 (strain E2348/69 / EPEC), this protein is UDP-N-acetyl-D-mannosaminuronic acid transferase.